The primary structure comprises 411 residues: F-box/kelch-repeat protein At3g61590 (411 aa).

An F-box domain is found at 37-83 (FSMDSLLPDDLLERILSFLPIASIFRAGTVCKRWNEIVSSRRFLCNF). Kelch repeat units lie at residues 81–135 (CNFS…SSCG), 137–178 (VCFM…MSTS), 196–246 (SIVK…ICNN), 251–299 (MIYS…LMNL), 302–350 (RLVI…EFDE), and 352–401 (FASS…FTGF).

As to quaternary structure, part of a SCF (ASK-cullin-F-box) protein ligase complex. Interacts with SKP1A/ASK1, SKP1B/ASK2, ASK3, ASK9, ASK11, ASK12, ASK13, ASK14, ASK16 and ASK18.

Its pathway is protein modification; protein ubiquitination. Functionally, component of SCF(ASK-cullin-F-box) E3 ubiquitin ligase complexes, which may mediate the ubiquitination and subsequent proteasomal degradation of target proteins. This Arabidopsis thaliana (Mouse-ear cress) protein is F-box/kelch-repeat protein At3g61590.